A 175-amino-acid polypeptide reads, in one-letter code: Major MR/P fimbria protein (175 aa).

Positions 1–23 (MKLNKLALVLGLGLSVVAGSALA) are cleaved as a signal peptide. A disulfide bridge links Cys42 with Cys81.

This sequence belongs to the fimbrial protein family.

The protein localises to the fimbrium. Major structural component of mannose-resistant/proteus-like fimbriae of P.mirabilis. In Proteus mirabilis (strain HI4320), this protein is Major MR/P fimbria protein (mrpA).